The sequence spans 295 residues: Pyridoxal 5'-phosphate synthase subunit PdxS (295 aa).

A D-ribose 5-phosphate-binding site is contributed by Asp-25. The active-site Schiff-base intermediate with D-ribose 5-phosphate is the Lys-82. Residue Gly-154 coordinates D-ribose 5-phosphate. Arg-166 serves as a coordination point for D-glyceraldehyde 3-phosphate. D-ribose 5-phosphate is bound by residues Gly-215 and 236 to 237 (GS).

It belongs to the PdxS/SNZ family. In the presence of PdxT, forms a dodecamer of heterodimers.

The catalysed reaction is aldehydo-D-ribose 5-phosphate + D-glyceraldehyde 3-phosphate + L-glutamine = pyridoxal 5'-phosphate + L-glutamate + phosphate + 3 H2O + H(+). It participates in cofactor biosynthesis; pyridoxal 5'-phosphate biosynthesis. Functionally, catalyzes the formation of pyridoxal 5'-phosphate from ribose 5-phosphate (RBP), glyceraldehyde 3-phosphate (G3P) and ammonia. The ammonia is provided by the PdxT subunit. Can also use ribulose 5-phosphate and dihydroxyacetone phosphate as substrates, resulting from enzyme-catalyzed isomerization of RBP and G3P, respectively. This chain is Pyridoxal 5'-phosphate synthase subunit PdxS, found in Actinobacillus pleuropneumoniae serotype 7 (strain AP76).